Consider the following 1437-residue polypeptide: Protein SUPPRESSOR OF npr1-1, CONSTITUTIVE 1 (1437 aa).

The residue at position 1 (methionine 1) is an N-acetylmethionine. The region spanning 19-182 (RRYDVFPSFR…ELAEDVLRKT (164 aa)) is the TIR domain. 28–33 (RGEDVR) lines the NAD(+) pocket. Glutamate 93 is a catalytic residue. LRR repeat units follow at residues 554-576 (MRNL…VYLP), 577-598 (LKLR…TFKA), 600-621 (YLVN…TLPL), 622-645 (GSLK…SLAI), 647-668 (LEEL…IQNA), 670-691 (KLIY…DLNL), 692-715 (ESLE…KMGC), 781-805 (LGSL…SKAT), 807-828 (LESL…IGNL), 829-851 (HRLV…DVNL), 852-875 (SSLE…STNI), 877-895 (WLYL…IGNL), 897-918 (RLVR…DVNL), 919-939 (SSLE…PLIS), 940-962 (ESIK…SKAT), 964-985 (LKNL…IGNL), 1009-1029 (SSLM…PLIS), 1030-1052 (TNIV…IGNL), 1054-1075 (RLVK…DVNL), 1076-1096 (SSLM…PLIS), 1097-1121 (TRIE…DFTR), 1123-1143 (TVLM…IFRL), and 1161-1185 (LSDA…NIEY).

Belongs to the disease resistance TIR-NB-LRR family. In terms of assembly, homodimer. Interacts (via TIR domain) with TPR1. Interacts with EDS1. Interacts with SRFR1. Interacts with HSP90-3. Binds to MORC1/CRT1. Interacts with TRAF1B. In terms of processing, met-1 is specifically acetylated by N-terminal acetyltransferase complex A (NatA). The NatA-mediated acetylation serves as a degradation signal. Post-translationally, met-1 is specifically acetylated by N-terminal acetyltransferase complex B (NatB). The NatB-mediated acetylation stabilizes SNC1. Expressed in guard cells and epidermal cells, but not detected in mesophyll cells.

The protein resides in the cytoplasm. It localises to the microsome. Its subcellular location is the nucleus. It carries out the reaction NAD(+) + H2O = ADP-D-ribose + nicotinamide + H(+). Its function is as follows. Disease resistance protein of the TIR-NB-LRR-type. Part of the RPP5 locus that contains a cluster of several paralogous disease resistance (R) genes. Resistance proteins guard the plant against pathogens that contain an appropriate avirulence protein via an indirect interaction with this avirulence protein. That triggers a defense system including the hypersensitive response, which restricts the pathogen growth. Probably acts as a NAD(+) hydrolase (NADase): in response to activation, catalyzes cleavage of NAD(+) into ADP-D-ribose (ADPR) and nicotinamide; NAD(+) cleavage triggering a defense system that promotes cell death. Expression regulated by MOS1 at chromatin level. Nuclear localization of SNC1 is essential for its activity. ABA deficiency can rescue high-temperature inhibition of SNC1-mediated defense responses. This chain is Protein SUPPRESSOR OF npr1-1, CONSTITUTIVE 1, found in Arabidopsis thaliana (Mouse-ear cress).